Here is a 505-residue protein sequence, read N- to C-terminus: Photosystem II CP47 reaction center protein (505 aa).

Residues Gly-1 to Ile-19 are Cytoplasmic-facing. The chlorophyll a site is built by His-8, His-22, His-25, His-99, and His-113. The chain crosses the membrane as a helical span at residues Ala-20–Ser-35. Residues Met-36–His-99 lie on the Lumenal side of the membrane. Residues Ile-100–Trp-114 form a helical membrane-spanning segment. Residues Val-115–Phe-138 lie on the Cytoplasmic side of the membrane. A helical membrane pass occupies residues Gly-139 to Phe-155. Chlorophyll a is bound by residues His-141, His-156, His-200, His-201, and His-215. At His-156–His-201 the chain is on the lumenal side. A helical membrane pass occupies residues Ile-202–Leu-217. Residues Val-218–Thr-235 are Cytoplasmic-facing. A helical transmembrane segment spans residues Val-236 to Val-251. Residues Ala-252 to Ala-455 are Lumenal-facing. Residues His-454, His-465, and His-468 each contribute to the chlorophyll a site. The chain crosses the membrane as a helical span at residues Val-456–Arg-471. Residues Thr-472–Lys-505 lie on the Cytoplasmic side of the membrane.

This sequence belongs to the PsbB/PsbC family. PsbB subfamily. In terms of assembly, PSII is composed of 1 copy each of membrane proteins PsbA, PsbB, PsbC, PsbD, PsbE, PsbF, PsbH, PsbI, PsbJ, PsbK, PsbL, PsbM, PsbT, PsbX, PsbY, PsbZ, Psb30/Ycf12, peripheral proteins PsbO, CyanoQ (PsbQ), PsbU, PsbV and a large number of cofactors. It forms dimeric complexes. Requires Binds multiple chlorophylls. PSII binds additional chlorophylls, carotenoids and specific lipids. as cofactor.

The protein resides in the cellular thylakoid membrane. Functionally, one of the components of the core complex of photosystem II (PSII). It binds chlorophyll and helps catalyze the primary light-induced photochemical processes of PSII. PSII is a light-driven water:plastoquinone oxidoreductase, using light energy to abstract electrons from H(2)O, generating O(2) and a proton gradient subsequently used for ATP formation. This is Photosystem II CP47 reaction center protein from Thermostichus vulcanus (Synechococcus vulcanus).